The following is a 466-amino-acid chain: 3-isopropylmalate dehydratase large subunit (466 aa).

3 residues coordinate [4Fe-4S] cluster: C345, C405, and C408.

Belongs to the aconitase/IPM isomerase family. LeuC type 1 subfamily. As to quaternary structure, heterodimer of LeuC and LeuD. It depends on [4Fe-4S] cluster as a cofactor.

It carries out the reaction (2R,3S)-3-isopropylmalate = (2S)-2-isopropylmalate. It functions in the pathway amino-acid biosynthesis; L-leucine biosynthesis; L-leucine from 3-methyl-2-oxobutanoate: step 2/4. Functionally, catalyzes the isomerization between 2-isopropylmalate and 3-isopropylmalate, via the formation of 2-isopropylmaleate. This is 3-isopropylmalate dehydratase large subunit from Microcystis aeruginosa (strain NIES-843 / IAM M-2473).